A 338-amino-acid polypeptide reads, in one-letter code: m7GpppX diphosphatase (338 aa).

Residues methionine 1–serine 36 form a disordered region. Residue alanine 2 is modified to N-acetylalanine. A nuclear localization signal (NLS) motif is present at residues lysine 9 to arginine 12. A phosphoserine mark is found at serine 23 and serine 100. Residues lysine 137 and lysine 141 each carry the N6-acetyllysine modification. The short motif at lysine 141–threonine 153 is the nuclear export sequence (NES) element. Residues tryptophan 174, glutamate 184, aspartate 204, lysine 206, and histidine 267–histidine 278 each bind substrate. Residues histidine 274 to histidine 278 carry the Histidine triad motif motif. The active-site Nucleophile is the histidine 276.

Belongs to the HIT family. As to quaternary structure, homodimer. Associates with components of the exosome multienzyme ribonuclease complex, such as EXOSC3 and EXOSC4. Interacts with NDOR1.

It localises to the cytoplasm. The protein resides in the nucleus. The catalysed reaction is a 5'-end (N(7)-methyl 5'-triphosphoguanosine)-ribonucleoside in mRNA + H2O = N(7)-methyl-GMP + a 5'-end diphospho-ribonucleoside in mRNA + 2 H(+). With respect to regulation, the hydrolytic product 7-methylguanosine diphosphate (m7GDP) efficiently inhibits the decapping scavenger activity and acts as a competitive inhibitor in vitro. Inhibited by 2,4-diaminoquinazoline. Functionally, decapping scavenger enzyme that catalyzes the cleavage of a residual cap structure following the degradation of mRNAs by the 3'-&gt;5' exosome-mediated mRNA decay pathway. Hydrolyzes cap analog structures like 7-methylguanosine nucleoside triphosphate (m7GpppG) with up to 10 nucleotide substrates (small capped oligoribonucleotides) and specifically releases 5'-phosphorylated RNA fragments and 7-methylguanosine monophosphate (m7GMP). Cleaves cap analog structures like tri-methyl guanosine nucleoside triphosphate (m3(2,2,7)GpppG) with very poor efficiency. Does not hydrolyze unmethylated cap analog (GpppG) and shows no decapping activity on intact m7GpppG-capped mRNA molecules longer than 25 nucleotides. Does not hydrolyze 7-methylguanosine diphosphate (m7GDP) to m7GMP. May also play a role in the 5'-&gt;3 mRNA decay pathway; m7GDP, the downstream product released by the 5'-&gt;3' mRNA mediated decapping activity, may be also converted by DCPS to m7GMP. Binds to m7GpppG and strongly to m7GDP. Plays a role in first intron splicing of pre-mRNAs. Inhibits activation-induced cell death. The sequence is that of m7GpppX diphosphatase (Dcps) from Mus musculus (Mouse).